We begin with the raw amino-acid sequence, 305 residues long: Cysteine synthase (305 aa).

Lys-45 is subject to N6-(pyridoxal phosphate)lysine. Residues Asn-75, 179-183 (GSGGT), and Ser-266 contribute to the pyridoxal 5'-phosphate site.

The protein belongs to the cysteine synthase/cystathionine beta-synthase family. Homodimer. Pyridoxal 5'-phosphate serves as cofactor.

The catalysed reaction is O-acetyl-L-serine + hydrogen sulfide = L-cysteine + acetate. The protein operates within amino-acid biosynthesis; L-cysteine biosynthesis; L-cysteine from L-serine: step 2/2. The polypeptide is Cysteine synthase (cysM) (Helicobacter pylori (strain J99 / ATCC 700824) (Campylobacter pylori J99)).